Consider the following 229-residue polypeptide: MAIGKRLKKAREGIDRTKLYPLDEAVKMVKERAVSKFDETIEVALNLGVDPRHADQMVRGVVMLPNGTGRTVRVGVFARGAKADEAKAAGADVVGAEDLVEQVQAGNINFDRCIATPDMMPLVGRLGKVLGPRGMMPNPKIGTVTMDVAGAVKGAKGGSVEFRVEKAGIVQAGVGKASFSEEKLVENIKALADAVTKAKPTGAKGTYIQRVAVSSSMGPGVKVEPGSVH.

This sequence belongs to the universal ribosomal protein uL1 family. Part of the 50S ribosomal subunit.

Its function is as follows. Binds directly to 23S rRNA. The L1 stalk is quite mobile in the ribosome, and is involved in E site tRNA release. Functionally, protein L1 is also a translational repressor protein, it controls the translation of the L11 operon by binding to its mRNA. The protein is Large ribosomal subunit protein uL1 of Rhodopseudomonas palustris (strain HaA2).